A 183-amino-acid chain; its full sequence is Lipocalin (183 aa).

The first 20 residues, 1-20, serve as a signal peptide directing secretion; sequence MKGLVLSFALVALSALCVYG. A disulfide bond links Cys83 and Cys179.

This sequence belongs to the calycin superfamily. Lipocalin family. In terms of assembly, monomer. In terms of tissue distribution, expressed mainly in choroid plexus. Much lower expression in other brain areas, and absent from liver.

The protein localises to the secreted. Its function is as follows. Might have a transport function across the blood brain barrier. Is supposed to have similar functions as a transthyretin which must have evolved after the stage of the amphibians in evolution. This chain is Lipocalin, found in Rhinella marina (Cane toad).